A 28-amino-acid polypeptide reads, in one-letter code: Conotoxin Vi14b (28 aa).

Disulfide bonds link Cys4–Cys21 and Cys7–Cys18. N6-acetyllysine is present on residues Lys15 and Lys25.

In terms of processing, the two N6-acetyllysines at position 15 and 25 have been deduced from the mass difference of 42. They are not common in venom proteins. As to expression, expressed by the venom gland.

It localises to the secreted. In vitro, inhibits proliferation of the mice ovarian cancer cells ID8. In Conus virgo (Virgin cone), this protein is Conotoxin Vi14b.